A 414-amino-acid polypeptide reads, in one-letter code: Tetraspanning orphan receptor (414 aa).

The Cytoplasmic segment spans residues 1 to 28 (MPRASALLTSDPRHQFTCCLCLHVRTGT). A helical membrane pass occupies residues 29-49 (IIFGITQIIIQLIFISFLFLM). Residues 50–166 (TFNPRLFPED…EIKIRQFSPY (117 aa)) lie on the Extracellular side of the membrane. Residues 167–187 (IAVCVTTFSLAFCCFMVHGAI) form a helical membrane-spanning segment. Residues 188 to 194 (TRQPTHL) lie on the Cytoplasmic side of the membrane. Residues 195-215 (LPFFFIQVFDLIICLIHILGF) form a helical membrane-spanning segment. Residues 216–241 (MSSTSDIRLMIHTKTGPIYIKSTGLA) are Extracellular-facing. The chain crosses the membrane as a helical span at residues 242-262 (FIILSISCMMLAFKAYCLGMV). Topologically, residues 263–414 (WDCYKYLMLN…TSTPSNVHPC (152 aa)) are cytoplasmic. The interval 306–328 (LTGNLDSANESNTRAHPDPVTYD) is disordered.

As to quaternary structure, interacts (via N-terminal extracellular domain) with human C2a. Phosphorylated on tyrosine residues.

It localises to the cell membrane. Its function is as follows. Cell surface receptor that binds to human complement C2a protein. This results in inhibition of the classical and lectin pathways of complement activation, probably due to interference with binding of C2a to C4b and interference with cleavage by C1 or MASP2 such that C3 convertase cannot be formed. This infers resistance to complement-mediated cell lysis, allowing parasite survival and infection. This Schistosoma japonicum (Blood fluke) protein is Tetraspanning orphan receptor.